Reading from the N-terminus, the 150-residue chain is Arginine repressor (150 aa).

This sequence belongs to the ArgR family.

The protein localises to the cytoplasm. The protein operates within amino-acid biosynthesis; L-arginine biosynthesis [regulation]. Its function is as follows. Regulates arginine biosynthesis genes. In Staphylococcus carnosus (strain TM300), this protein is Arginine repressor.